We begin with the raw amino-acid sequence, 65 residues long: Toxin Co52 (65 aa).

In terms of domain architecture, LCN-type CS-alpha/beta spans 2 to 65 (EDGYLVDKTG…PTWPLPNKTC (64 aa)). Disulfide bonds link Cys-12–Cys-65, Cys-16–Cys-41, Cys-25–Cys-46, and Cys-29–Cys-48.

Expressed by the venom gland.

The protein resides in the secreted. In terms of biological role, beta toxins bind voltage-independently at site-4 of sodium channels (Nav) and shift the voltage of activation toward more negative potentials thereby affecting sodium channel activation and promoting spontaneous and repetitive firing. Not toxic to mice, chicks, crickets or woodlice (at 5 ug). This chain is Toxin Co52, found in Centruroides ornatus (Scorpion).